Consider the following 205-residue polypeptide: Non-specific lipid transfer protein GPI-anchored 13 (205 aa).

Positions 1–24 (MESRKIKVMATAIALIMVAMVVDA) are cleaved as a signal peptide. Cystine bridges form between C36–C77, C46–C61, C62–C104, and C75–C113. 3 N-linked (GlcNAc...) asparagine glycosylation sites follow: N93, N137, and N165. Residues 141 to 176 (SASAPTGSASEPTSMSSTPGSSAGNNSGRTTSVPGT) form a disordered region. The GPI-anchor amidated asparagine moiety is linked to residue N177. Positions 178–205 (HAQSFSKQWLGLEVVAHFFVIFYIFILV) are cleaved as a propeptide — removed in mature form.

It belongs to the plant LTP family. In terms of tissue distribution, expressed preferentially in expanding leaves and sepals, restricted to the distal side. Expressed at low levels in roots and stems.

Its subcellular location is the cell membrane. In terms of biological role, probable lipid transfer protein. The sequence is that of Non-specific lipid transfer protein GPI-anchored 13 from Arabidopsis thaliana (Mouse-ear cress).